We begin with the raw amino-acid sequence, 804 residues long: Probable exo-1,4-beta-xylosidase xlnD (804 aa).

A signal peptide spans 1–17 (MAVAALALLALLPQALG). N-linked (GlcNAc...) asparagine glycosylation is found at Asn-20, Asn-115, Asn-139, Asn-234, and Asn-243. The active site involves Asp-307. N-linked (GlcNAc...) asparagine glycosylation is found at Asn-349, Asn-382, Asn-404, Asn-433, Asn-444, Asn-485, Asn-489, Asn-621, Asn-652, Asn-666, Asn-688, and Asn-710.

The protein belongs to the glycosyl hydrolase 3 family.

It is found in the secreted. It catalyses the reaction Hydrolysis of (1-&gt;4)-beta-D-xylans, to remove successive D-xylose residues from the non-reducing termini.. The protein operates within glycan degradation; xylan degradation. Its function is as follows. Xylan 1,4-beta-xylosidase involved in the hydrolysis of xylan, a major structural heterogeneous polysaccharide found in plant biomass representing the second most abundant polysaccharide in the biosphere, after cellulose. In Aspergillus japonicus, this protein is Probable exo-1,4-beta-xylosidase xlnD (xlnD).